Reading from the N-terminus, the 201-residue chain is Iron-sulfur flavoprotein AF_1896 (201 aa).

Residues cysteine 46, cysteine 49, cysteine 52, and cysteine 57 each contribute to the [4Fe-4S] cluster site.

It belongs to the SsuE family. Isf subfamily. In terms of assembly, homodimer. FMN is required as a cofactor. Requires [4Fe-4S] cluster as cofactor.

Functionally, redox-active protein probably involved in electron transport. The polypeptide is Iron-sulfur flavoprotein AF_1896 (Archaeoglobus fulgidus (strain ATCC 49558 / DSM 4304 / JCM 9628 / NBRC 100126 / VC-16)).